The sequence spans 456 residues: MRPYYIAIVGSGPSAFFAAASLLKAADTTEDLDMAVDMLEMLPTPWGLVRSGVAPDHPKIKSISKQFEKTAEDPRFRFFGNVVVGEHVQPGELSERYDAVIYAVGAQSDRMLNIPGEDLPGSIAAVDFVGWYNAHPHFEQVSPDLSGARAVVIGNGNVALDVARILLTDPDVLARTDIADHALESLRPRGIQEVVIVGRRGPLQAAFTTLELRELADLDGVDVVIDPAELDGITDEDAAAVGKVCKQNIKVLRGYADREPRPGHRRMVFRFLTSPIEIKGKRKVERIVLGRNELVSDGSGRVAAKDTGEREELPAQLVVRSVGYRGVPTPGLPFDDQSGTIPNVGGRINGSPNEYVVGWIKRGPTGVIGTNKKDAQDTVDTLIKNLGNAKEGAECKSFPEDHADQVADWLAARQPKLVTSAHWQVIDAFERAAGEPHGRPRVKLASLAELLRIGLG.

4 residues coordinate FAD: Ser-14, Glu-40, Leu-48, and Val-84. NADP(+) is bound by residues Arg-110, Asn-155–Val-158, Arg-199–Arg-200, and Glu-211. FAD is bound by residues Trp-359 and Gly-366 to Ile-368. NADP(+) is bound at residue Gly-366.

It belongs to the ferredoxin--NADP reductase type 1 family. In terms of assembly, monomer. FAD serves as cofactor.

The catalysed reaction is 2 reduced [2Fe-2S]-[ferredoxin] + NADP(+) + H(+) = 2 oxidized [2Fe-2S]-[ferredoxin] + NADPH. Functionally, may serve as electron transfer protein and supply electrons to P450 systems. The protein is NADPH-ferredoxin reductase FprA (fprA) of Mycobacterium tuberculosis (strain CDC 1551 / Oshkosh).